Consider the following 102-residue polypeptide: NADH-quinone oxidoreductase subunit K (102 aa).

A run of 3 helical transmembrane segments spans residues 5 to 25 (LSHYLTVSAILFTIGVFGIFL), 31 to 51 (IVILMSIELILLAVNINMVAF), and 65 to 85 (LFILTVAAAEAAIGLAILVVF).

It belongs to the complex I subunit 4L family. In terms of assembly, NDH-1 is composed of 14 different subunits. Subunits NuoA, H, J, K, L, M, N constitute the membrane sector of the complex.

The protein localises to the cell inner membrane. It carries out the reaction a quinone + NADH + 5 H(+)(in) = a quinol + NAD(+) + 4 H(+)(out). NDH-1 shuttles electrons from NADH, via FMN and iron-sulfur (Fe-S) centers, to quinones in the respiratory chain. The immediate electron acceptor for the enzyme in this species is believed to be ubiquinone. Couples the redox reaction to proton translocation (for every two electrons transferred, four hydrogen ions are translocated across the cytoplasmic membrane), and thus conserves the redox energy in a proton gradient. This is NADH-quinone oxidoreductase subunit K from Agrobacterium fabrum (strain C58 / ATCC 33970) (Agrobacterium tumefaciens (strain C58)).